A 154-amino-acid polypeptide reads, in one-letter code: Myoglobin (154 aa).

A Globin domain is found at 2-148; the sequence is GLSDGEWQLV…FRNDIAAKYK (147 aa). Position 4 is a phosphoserine (S4). H65 is a binding site for nitrite. O2 is bound at residue H65. A Phosphothreonine modification is found at T68. H94 is a heme b binding site.

It belongs to the globin family. Monomeric.

It is found in the cytoplasm. The protein resides in the sarcoplasm. It catalyses the reaction Fe(III)-heme b-[protein] + nitric oxide + H2O = Fe(II)-heme b-[protein] + nitrite + 2 H(+). The enzyme catalyses H2O2 + AH2 = A + 2 H2O. In terms of biological role, monomeric heme protein which primary function is to store oxygen and facilitate its diffusion within muscle tissues. Reversibly binds oxygen through a pentacoordinated heme iron and enables its timely and efficient release as needed during periods of heightened demand. Depending on the oxidative conditions of tissues and cells, and in addition to its ability to bind oxygen, it also has a nitrite reductase activity whereby it regulates the production of bioactive nitric oxide. Under stress conditions, like hypoxia and anoxia, it also protects cells against reactive oxygen species thanks to its pseudoperoxidase activity. In Erinaceus europaeus (Western European hedgehog), this protein is Myoglobin (MB).